Here is a 189-residue protein sequence, read N- to C-terminus: SAGA-associated factor 11 homolog (189 aa).

Residues 94–115 (CTCPNCDRLVAATRFAPHLEKC) form an SGF11-type zinc finger. The interval 128–189 (RRLATKEGSS…GSKKNNGKTF (62 aa)) is disordered. Positions 136 to 145 (SSASSTSTST) are enriched in low complexity. Serine 165 is subject to Phosphoserine. Over residues 175–189 (NSRNNGSKKNNGKTF) the composition is skewed to low complexity.

It belongs to the SGF11 family. As to quaternary structure, component of some SAGA transcription coactivator-HAT complexes, at least composed of Ada2b, not/nonstop, Pcaf/Gcn5, Sgf11 and Spt3. Within the SAGA complex, Sgf11, e(y)2, and not/nonstop form an additional subcomplex of SAGA called the DUB module (deubiquitination module). Interacts directly with not/nonstop. Interacts with the AMEX complex component xmas-2. Interacts with Cbp80; important for promoter recruitment of Sgf11 that is not associated with the DUB module.

It is found in the nucleus. The protein localises to the nucleoplasm. The protein resides in the cytoplasm. Component of the transcription regulatory histone acetylation (HAT) complex SAGA, a multiprotein complex that activates transcription by remodeling chromatin and mediating histone acetylation and deubiquitination. Within the SAGA complex, participates in a subcomplex that specifically deubiquitinates histone H2B. The SAGA complex is recruited to specific gene promoters by activators, where it is required for transcription. Required for nuclear receptor-mediated transactivation. Binds independently on SAGA to promoters in an RNA-dependent manner. Binds to mRNA and is essential for total mRNA export from the nucleus. Required to counteract heterochromatin silencing. Controls the development of neuronal connectivity in visual system by being required for accurate axon targeting in the optic lobe. Required for expression of ecdysone-induced genes such as br/broad. The protein is SAGA-associated factor 11 homolog of Drosophila virilis (Fruit fly).